The chain runs to 308 residues: tRNA pseudouridine synthase B (308 aa).

Aspartate 47 serves as the catalytic Nucleophile.

Belongs to the pseudouridine synthase TruB family. Type 1 subfamily.

It carries out the reaction uridine(55) in tRNA = pseudouridine(55) in tRNA. In terms of biological role, responsible for synthesis of pseudouridine from uracil-55 in the psi GC loop of transfer RNAs. This is tRNA pseudouridine synthase B from Xanthomonas axonopodis pv. citri (strain 306).